The primary structure comprises 43 residues: uncharacterized protein (43 aa).

This is an uncharacterized protein from Saccharomyces cerevisiae (strain ATCC 204508 / S288c) (Baker's yeast).